Reading from the N-terminus, the 184-residue chain is Cytidylate kinase (184 aa).

8 to 16 lines the ATP pocket; it reads GQPGSGKTT.

The protein belongs to the cytidylate kinase family. Type 2 subfamily.

It is found in the cytoplasm. It carries out the reaction CMP + ATP = CDP + ADP. The catalysed reaction is dCMP + ATP = dCDP + ADP. The polypeptide is Cytidylate kinase (Pyrobaculum calidifontis (strain DSM 21063 / JCM 11548 / VA1)).